Reading from the N-terminus, the 119-residue chain is Large ribosomal subunit protein uL22 (119 aa).

It belongs to the universal ribosomal protein uL22 family. In terms of assembly, part of the 50S ribosomal subunit.

This protein binds specifically to 23S rRNA; its binding is stimulated by other ribosomal proteins, e.g. L4, L17, and L20. It is important during the early stages of 50S assembly. It makes multiple contacts with different domains of the 23S rRNA in the assembled 50S subunit and ribosome. In terms of biological role, the globular domain of the protein is located near the polypeptide exit tunnel on the outside of the subunit, while an extended beta-hairpin is found that lines the wall of the exit tunnel in the center of the 70S ribosome. This is Large ribosomal subunit protein uL22 from Chlorobaculum tepidum (strain ATCC 49652 / DSM 12025 / NBRC 103806 / TLS) (Chlorobium tepidum).